A 175-amino-acid polypeptide reads, in one-letter code: Ribosome maturation factor RimM (175 aa).

The PRC barrel domain occupies 98-175 (EGEYYWYQLE…EMRVDWDADF (78 aa)).

Belongs to the RimM family. In terms of assembly, binds ribosomal protein uS19.

The protein localises to the cytoplasm. In terms of biological role, an accessory protein needed during the final step in the assembly of 30S ribosomal subunit, possibly for assembly of the head region. Essential for efficient processing of 16S rRNA. May be needed both before and after RbfA during the maturation of 16S rRNA. It has affinity for free ribosomal 30S subunits but not for 70S ribosomes. The chain is Ribosome maturation factor RimM from Pseudomonas paraeruginosa (strain DSM 24068 / PA7) (Pseudomonas aeruginosa (strain PA7)).